A 206-amino-acid polypeptide reads, in one-letter code: Small ribosomal subunit protein uS4 (206 aa).

The 61-residue stretch at 96 to 156 (CRLDNVVYRM…EKAKNQLRIV (61 aa)) folds into the S4 RNA-binding domain.

It belongs to the universal ribosomal protein uS4 family. In terms of assembly, part of the 30S ribosomal subunit. Contacts protein S5. The interaction surface between S4 and S5 is involved in control of translational fidelity.

In terms of biological role, one of the primary rRNA binding proteins, it binds directly to 16S rRNA where it nucleates assembly of the body of the 30S subunit. Its function is as follows. With S5 and S12 plays an important role in translational accuracy. This Pseudomonas fluorescens (strain SBW25) protein is Small ribosomal subunit protein uS4.